The primary structure comprises 118 residues: MARIAGVNLPAQKHVWVGLQSIYGIGRTRSKKVCEVAGVASTTKIRDLSEPEIERLRAEVGKYIVEGDLRREIGIAIKRLMDLGCYRGLRHRRGLPLRGQRTRTNARTRKGPRKAIRK.

Residues 94–118 (GLPLRGQRTRTNARTRKGPRKAIRK) are disordered.

It belongs to the universal ribosomal protein uS13 family. Part of the 30S ribosomal subunit. Forms a loose heterodimer with protein S19. Forms two bridges to the 50S subunit in the 70S ribosome.

In terms of biological role, located at the top of the head of the 30S subunit, it contacts several helices of the 16S rRNA. In the 70S ribosome it contacts the 23S rRNA (bridge B1a) and protein L5 of the 50S subunit (bridge B1b), connecting the 2 subunits; these bridges are implicated in subunit movement. Contacts the tRNAs in the A and P-sites. This is Small ribosomal subunit protein uS13 from Stenotrophomonas maltophilia (strain R551-3).